We begin with the raw amino-acid sequence, 453 residues long: 3-phosphoshikimate 1-carboxyvinyltransferase (453 aa).

3-phosphoshikimate contacts are provided by Lys28, Ser29, and Arg33. Position 28 (Lys28) interacts with phosphoenolpyruvate. 2 residues coordinate phosphoenolpyruvate: Gly101 and Arg129. 3-phosphoshikimate is bound by residues Ser174, Gln176, Asp326, and Lys353. Position 176 (Gln176) interacts with phosphoenolpyruvate. Asp326 serves as the catalytic Proton acceptor. Residues Arg357 and Arg405 each contribute to the phosphoenolpyruvate site.

This sequence belongs to the EPSP synthase family. Monomer.

The protein resides in the cytoplasm. The enzyme catalyses 3-phosphoshikimate + phosphoenolpyruvate = 5-O-(1-carboxyvinyl)-3-phosphoshikimate + phosphate. The protein operates within metabolic intermediate biosynthesis; chorismate biosynthesis; chorismate from D-erythrose 4-phosphate and phosphoenolpyruvate: step 6/7. Functionally, catalyzes the transfer of the enolpyruvyl moiety of phosphoenolpyruvate (PEP) to the 5-hydroxyl of shikimate-3-phosphate (S3P) to produce enolpyruvyl shikimate-3-phosphate and inorganic phosphate. This is 3-phosphoshikimate 1-carboxyvinyltransferase from Zymomonas mobilis subsp. mobilis (strain ATCC 31821 / ZM4 / CP4).